We begin with the raw amino-acid sequence, 510 residues long: Nectin-4 (510 aa).

A signal peptide spans 1–31 (MPLSLGAEMWGPEAWLLLLLLLASFTGRCPA). The Ig-like V-type domain occupies 32–144 (GELETSDVVT…GSFQARLRLR (113 aa)). The Extracellular segment spans residues 32-349 (GELETSDVVT…GKQVDLVSAS (318 aa)). Cystine bridges form between cysteine 52-cysteine 127, cysteine 171-cysteine 223, and cysteine 270-cysteine 315. Ig-like C2-type domains lie at 148-237 (PPLP…QRIT) and 248-331 (ASVR…VTVD). N-linked (GlcNAc...) asparagine glycosylation occurs at asparagine 281. A helical membrane pass occupies residues 350–370 (VVVVGVIAALLFCLLVVVVVL). Residues 371–510 (MSRYHRRKAQ…IYINGRGHLV (140 aa)) are Cytoplasmic-facing. A compositionally biased stretch (basic and acidic residues) spans 399–412 (RRLHSHHTDPRSQP). Disordered regions lie at residues 399–447 (RRLH…SYST) and 457–476 (QTEL…DQDE).

It belongs to the nectin family. As to quaternary structure, self-associates. Interacts via its Ig-like V-type domain with NECTIN1 Ig-like V-type domain. Interacts via its C-terminus with AFDN. In terms of assembly, (Microbial infection) Interacts (via N-terminus) with measles virus hemagglutinin protein. The soluble form is produced by proteolytic cleavage at the cell surface (shedding), probably by ADAM17/TACE. Predominantly expressed in placenta. Not detected in normal breast epithelium but expressed in breast carcinoma.

Its subcellular location is the cell membrane. The protein localises to the cell junction. It is found in the adherens junction. It localises to the secreted. Functionally, seems to be involved in cell adhesion through trans-homophilic and -heterophilic interactions, the latter including specifically interactions with NECTIN1. Does not act as receptor for alpha-herpesvirus entry into cells. Its function is as follows. (Microbial infection) Acts as a receptor for measles virus. This chain is Nectin-4, found in Homo sapiens (Human).